Here is a 222-residue protein sequence, read N- to C-terminus: Histidine biosynthesis bifunctional protein HisIE (222 aa).

The segment at 1-128 is phosphoribosyl-AMP cyclohydrolase; that stretch reads MQPLSPAFID…SLTLPPPMDA (128 aa). The segment at 129–222 is phosphoribosyl-ATP pyrophosphohydrolase; sequence CSELFRVIDQ…ANRRGAPRRN (94 aa).

In the N-terminal section; belongs to the PRA-CH family. This sequence in the C-terminal section; belongs to the PRA-PH family.

It localises to the cytoplasm. The enzyme catalyses 1-(5-phospho-beta-D-ribosyl)-ATP + H2O = 1-(5-phospho-beta-D-ribosyl)-5'-AMP + diphosphate + H(+). The catalysed reaction is 1-(5-phospho-beta-D-ribosyl)-5'-AMP + H2O = 1-(5-phospho-beta-D-ribosyl)-5-[(5-phospho-beta-D-ribosylamino)methylideneamino]imidazole-4-carboxamide. It functions in the pathway amino-acid biosynthesis; L-histidine biosynthesis; L-histidine from 5-phospho-alpha-D-ribose 1-diphosphate: step 2/9. The protein operates within amino-acid biosynthesis; L-histidine biosynthesis; L-histidine from 5-phospho-alpha-D-ribose 1-diphosphate: step 3/9. The protein is Histidine biosynthesis bifunctional protein HisIE of Prochlorococcus marinus (strain MIT 9313).